Consider the following 232-residue polypeptide: Orotidine 5'-phosphate decarboxylase (232 aa).

Residues aspartate 16, lysine 38, 65-74 (DLKLHDIGNT), threonine 119, arginine 180, glutamine 189, glycine 209, and arginine 210 contribute to the substrate site. Lysine 67 serves as the catalytic Proton donor.

This sequence belongs to the OMP decarboxylase family. Type 1 subfamily. In terms of assembly, homodimer.

The enzyme catalyses orotidine 5'-phosphate + H(+) = UMP + CO2. The protein operates within pyrimidine metabolism; UMP biosynthesis via de novo pathway; UMP from orotate: step 2/2. In terms of biological role, catalyzes the decarboxylation of orotidine 5'-monophosphate (OMP) to uridine 5'-monophosphate (UMP). The chain is Orotidine 5'-phosphate decarboxylase from Methylorubrum populi (strain ATCC BAA-705 / NCIMB 13946 / BJ001) (Methylobacterium populi).